A 351-amino-acid chain; its full sequence is Inhibin beta C chain (351 aa).

The first 18 residues, 1-18 (MASSLLLALLFLTLATVV), serve as a signal peptide directing secretion. The propeptide occupies 19–236 (NLKTDGPCPA…EGKHRVRRRG (218 aa)). N110, N142, and N160 each carry an N-linked (GlcNAc...) asparagine glycan. Intrachain disulfides connect C239/C247, C246/C316, C275/C348, and C279/C350.

Belongs to the TGF-beta family. Homodimeric or heterodimeric through association with alpha and beta subunits, linked by one or more disulfide bonds. Inhibins are heterodimers of one alpha and one beta subunit. Activins are homo- or heterodimers of beta subunits only.

The protein localises to the secreted. Inhibins and activins inhibit and activate, respectively, the secretion of follitropin by the pituitary gland. Inhibins/activins are involved in regulating a number of diverse functions such as hypothalamic and pituitary hormone secretion, gonadal hormone secretion, germ cell development and maturation, erythroid differentiation, insulin secretion, nerve cell survival, embryonic axial development or bone growth, depending on their subunit composition. Inhibins appear to oppose the functions of activins. The protein is Inhibin beta C chain (Inhbc) of Rattus norvegicus (Rat).